Consider the following 334-residue polypeptide: Glyceraldehyde-3-phosphate dehydrogenase (334 aa).

Residues 12–13 (TI) and glycine 111 each bind NAD(+). 140–142 (SCN) lines the D-glyceraldehyde 3-phosphate pocket. Cysteine 141 serves as the catalytic Nucleophile. Arginine 167 is a binding site for NAD(+). 192-193 (HG) is a binding site for D-glyceraldehyde 3-phosphate. Glutamine 298 is a binding site for NAD(+).

The protein belongs to the glyceraldehyde-3-phosphate dehydrogenase family. As to quaternary structure, homotetramer.

The protein resides in the encapsulin nanocompartment. It catalyses the reaction D-glyceraldehyde 3-phosphate + phosphate + NADP(+) = (2R)-3-phospho-glyceroyl phosphate + NADPH + H(+). The catalysed reaction is D-glyceraldehyde 3-phosphate + phosphate + NAD(+) = (2R)-3-phospho-glyceroyl phosphate + NADH + H(+). It participates in carbohydrate degradation; glycolysis; pyruvate from D-glyceraldehyde 3-phosphate: step 1/5. Its function is as follows. Possible cargo protein of a type 4B encapsulin nanocompartment. Active in the presence of NAD and NADP, prefers NADP. This Pyrococcus furiosus (strain ATCC 43587 / DSM 3638 / JCM 8422 / Vc1) protein is Glyceraldehyde-3-phosphate dehydrogenase (gap).